The following is a 165-amino-acid chain: UPF0254 protein MMP0935 (165 aa).

This sequence belongs to the UPF0254 family.

The polypeptide is UPF0254 protein MMP0935 (Methanococcus maripaludis (strain DSM 14266 / JCM 13030 / NBRC 101832 / S2 / LL)).